We begin with the raw amino-acid sequence, 479 residues long: F-box protein SKIP17 (479 aa).

Residues 92 to 138 (NSNSWSLPPELTIKVFSMLDTKSMMQAAVCCTMFNKCAMDRLCYSHI) form the F-box domain. The tract at residues 435–479 (EMMEAEDDEVDEEDDSDDDTDDVSDEDESENDDDMGMGFDVDYLL) is disordered. Residues 437–469 (MEAEDDEVDEEDDSDDDTDDVSDEDESENDDDM) are compositionally biased toward acidic residues.

As to quaternary structure, part of a SCF (ASK-cullin-F-box) protein ligase complex. Interacts with SPK1B/ASK2.

The protein resides in the nucleus. Its pathway is protein modification; protein ubiquitination. In terms of biological role, component of SCF(ASK-cullin-F-box) E3 ubiquitin ligase complexes, which may mediate the ubiquitination and subsequent proteasomal degradation of target proteins. This is F-box protein SKIP17 (SKIP17) from Arabidopsis thaliana (Mouse-ear cress).